A 261-amino-acid chain; its full sequence is Indole-3-glycerol phosphate synthase (261 aa).

It belongs to the TrpC family.

It catalyses the reaction 1-(2-carboxyphenylamino)-1-deoxy-D-ribulose 5-phosphate + H(+) = (1S,2R)-1-C-(indol-3-yl)glycerol 3-phosphate + CO2 + H2O. It participates in amino-acid biosynthesis; L-tryptophan biosynthesis; L-tryptophan from chorismate: step 4/5. The sequence is that of Indole-3-glycerol phosphate synthase from Campylobacter concisus (strain 13826).